The primary structure comprises 192 residues: A-type ATP synthase subunit E (192 aa).

This sequence belongs to the V-ATPase E subunit family. In terms of assembly, has multiple subunits with at least A(3), B(3), C, D, E, F, H, I and proteolipid K(x).

Its subcellular location is the cell membrane. Component of the A-type ATP synthase that produces ATP from ADP in the presence of a proton gradient across the membrane. The protein is A-type ATP synthase subunit E of Methanocorpusculum labreanum (strain ATCC 43576 / DSM 4855 / Z).